The primary structure comprises 1196 residues: [NU+] prion formation protein 1 (1196 aa).

Disordered stretches follow at residues 1–49 (MPPK…KSSY) and 103–125 (TYKQSAVTPNQSGTPTPSASTTS). Composition is skewed to polar residues over residues 39-49 (GSNNASKKSSY) and 103-113 (TYKQSAVTPNQ). The segment covering 114-125 (SGTPTPSASTTS) has biased composition (low complexity). Position 443 is a phosphoserine (S443). ABC transporter domains are found at residues 570 to 786 (IEIV…YYTL) and 812 to 1129 (AKMT…ADAV). ATP is bound by residues 604–611 (GRNGAGKS) and 846–853 (GPNGAGKS). Residues 942–1003 (RAIEAIVGRQ…HEASREGLGY (62 aa)) enclose the Chromo domain. Disordered regions lie at residues 1137 to 1166 (AKPSVDDDDSPANIKVKQRKKRLTRNEKKL) and 1177 to 1196 (EWLSSPKGTPKPVDTDDEED). T1191 bears the Phosphothreonine mark.

This sequence belongs to the ABC transporter superfamily. ABCF family. EF3 subfamily.

The protein localises to the cytoplasm. It is found in the nucleus. Functionally, may be involved in the mRNA export process. Forms the [NU+] prion and induces [PSI+] prion formation. This is [NU+] prion formation protein 1 (NEW1) from Saccharomyces cerevisiae (strain ATCC 204508 / S288c) (Baker's yeast).